The sequence spans 337 residues: RNA 3'-terminal phosphate cyclase (337 aa).

ATP contacts are provided by residues Gln101 and 282-285; that span reads HMSD. His306 (tele-AMP-histidine intermediate) is an active-site residue.

This sequence belongs to the RNA 3'-terminal cyclase family. Type 1 subfamily.

The protein localises to the cytoplasm. It catalyses the reaction a 3'-end 3'-phospho-ribonucleotide-RNA + ATP = a 3'-end 2',3'-cyclophospho-ribonucleotide-RNA + AMP + diphosphate. In terms of biological role, catalyzes the conversion of 3'-phosphate to a 2',3'-cyclic phosphodiester at the end of RNA. The mechanism of action of the enzyme occurs in 3 steps: (A) adenylation of the enzyme by ATP; (B) transfer of adenylate to an RNA-N3'P to produce RNA-N3'PP5'A; (C) and attack of the adjacent 2'-hydroxyl on the 3'-phosphorus in the diester linkage to produce the cyclic end product. The biological role of this enzyme is unknown but it is likely to function in some aspects of cellular RNA processing. The polypeptide is RNA 3'-terminal phosphate cyclase (Saccharolobus islandicus (strain L.S.2.15 / Lassen #1) (Sulfolobus islandicus)).